Reading from the N-terminus, the 165-residue chain is Phosphopantetheine adenylyltransferase (165 aa).

Ser-11 is a binding site for substrate. ATP-binding positions include 11–12 (SF) and His-19. Substrate-binding residues include Lys-43, Thr-76, and Arg-90. ATP contacts are provided by residues 91–93 (GIR), Glu-101, and 126–132 (FSFISSS).

Belongs to the bacterial CoaD family. Homohexamer. It depends on Mg(2+) as a cofactor.

It is found in the cytoplasm. It catalyses the reaction (R)-4'-phosphopantetheine + ATP + H(+) = 3'-dephospho-CoA + diphosphate. It participates in cofactor biosynthesis; coenzyme A biosynthesis; CoA from (R)-pantothenate: step 4/5. Its function is as follows. Reversibly transfers an adenylyl group from ATP to 4'-phosphopantetheine, yielding dephospho-CoA (dPCoA) and pyrophosphate. The polypeptide is Phosphopantetheine adenylyltransferase (Latilactobacillus sakei subsp. sakei (strain 23K) (Lactobacillus sakei subsp. sakei)).